We begin with the raw amino-acid sequence, 132 residues long: Ribosome-binding factor A (132 aa).

Belongs to the RbfA family. As to quaternary structure, monomer. Binds 30S ribosomal subunits, but not 50S ribosomal subunits or 70S ribosomes.

It localises to the cytoplasm. Its function is as follows. One of several proteins that assist in the late maturation steps of the functional core of the 30S ribosomal subunit. Associates with free 30S ribosomal subunits (but not with 30S subunits that are part of 70S ribosomes or polysomes). Required for efficient processing of 16S rRNA. May interact with the 5'-terminal helix region of 16S rRNA. The protein is Ribosome-binding factor A of Pseudomonas putida (strain W619).